The chain runs to 396 residues: Mevalonate kinase (396 aa).

ATP-binding positions include Lys13, Asn55, Ser135, and 140–146 (GAGLGSS). Catalysis depends on Ser146, which acts as the Proton donor. Positions 146 and 193 each coordinate Mg(2+). The Proton acceptor role is filled by Asp204.

This sequence belongs to the GHMP kinase family. Mevalonate kinase subfamily. As to quaternary structure, homodimer. Requires Mg(2+) as cofactor.

The protein resides in the cytoplasm. Its subcellular location is the peroxisome. It carries out the reaction (R)-mevalonate + ATP = (R)-5-phosphomevalonate + ADP + H(+). The protein operates within isoprenoid biosynthesis; isopentenyl diphosphate biosynthesis via mevalonate pathway; isopentenyl diphosphate from (R)-mevalonate: step 1/3. Farnesyl pyrophosphate and geranyl pyrophosphate inhibit mevalonate kinase activity by binding competitively at the ATP-binding sites. Its function is as follows. Catalyzes the phosphorylation of mevalonate to mevalonate 5-phosphate, a key step in isoprenoid and cholesterol biosynthesis. The protein is Mevalonate kinase of Homo sapiens (Human).